A 322-amino-acid chain; its full sequence is Protein-L-isoaspartate O-methyltransferase (322 aa).

The segment at 1–101 (MSGERAKRFP…AKQGDRSAAP (101 aa)) is disordered. Residues 14–29 (EDLKREPRKPEGRVAE) are compositionally biased toward basic and acidic residues. 2 stretches are compositionally biased toward low complexity: residues 33–51 (AGDAARQRLTAAAAVPAAA) and 76–91 (HAPAAPGAAKRAPQGG). The active site involves Ser-170.

The protein belongs to the methyltransferase superfamily. L-isoaspartyl/D-aspartyl protein methyltransferase family.

Its subcellular location is the cytoplasm. The enzyme catalyses [protein]-L-isoaspartate + S-adenosyl-L-methionine = [protein]-L-isoaspartate alpha-methyl ester + S-adenosyl-L-homocysteine. Its function is as follows. Catalyzes the methyl esterification of L-isoaspartyl residues in peptides and proteins that result from spontaneous decomposition of normal L-aspartyl and L-asparaginyl residues. It plays a role in the repair and/or degradation of damaged proteins. The chain is Protein-L-isoaspartate O-methyltransferase from Burkholderia mallei (strain NCTC 10247).